Here is a 177-residue protein sequence, read N- to C-terminus: Peptide methionine sulfoxide reductase MsrA (177 aa).

Residue C11 is part of the active site.

The protein belongs to the MsrA Met sulfoxide reductase family.

It catalyses the reaction L-methionyl-[protein] + [thioredoxin]-disulfide + H2O = L-methionyl-(S)-S-oxide-[protein] + [thioredoxin]-dithiol. The enzyme catalyses [thioredoxin]-disulfide + L-methionine + H2O = L-methionine (S)-S-oxide + [thioredoxin]-dithiol. Has an important function as a repair enzyme for proteins that have been inactivated by oxidation. Catalyzes the reversible oxidation-reduction of methionine sulfoxide in proteins to methionine. This chain is Peptide methionine sulfoxide reductase MsrA, found in Trichodesmium erythraeum (strain IMS101).